Consider the following 473-residue polypeptide: MKTDTSTFLAQQIVRLRRRDQIRRLMQRDKTPLAILLMAAVVGTLTGLVGVAFEKAVSWVQNMRIGALVQVADHAFLLWPLAFILSALLAMVGYFLVRKFAPEAGGSGIPEIEGALEELRPVRWWRVLPVKFIGGMGTLGAGMVLGREGPTVQIGGNLGRMVLDVFRMRSAEARHTLLATGAAAGLSAAFNAPLAGILFIIEEMRPQFRYNLISIKAVFTGVIMSSIVFRIFNGEAPIIEVGKLSDAPVNTLWLYLILGIIFGCVGPVFNSLVLRTQDMFQRFHGGEIKKWVLMGGAIGGLCGILGLIEPEAAGGGFNLIPIAAAGNFSVGLLLFIFITRVVTTLLCFSSGAPGGIFAPMLALGTLLGTAFGMAAAVLFPQYHLEAGTFAIAGMGALMAASVRAPLTGIVLVLEMTDNYQLILPMIITCLGATLLAQFLGGKPLYSTILARTLAKQDAEQAAKNQNAPAGENT.

The Cytoplasmic segment spans residues 1 to 32; the sequence is MKTDTSTFLAQQIVRLRRRDQIRRLMQRDKTP. Residues 33–69 traverse the membrane as a helical segment; the sequence is LAILLMAAVVGTLTGLVGVAFEKAVSWVQNMRIGALV. Residues 70 to 76 are Periplasmic-facing; the sequence is QVADHAF. A helical membrane pass occupies residues 77–100; sequence LLWPLAFILSALLAMVGYFLVRKF. The Selectivity filter part_1 signature appears at 106-110; it reads GSGIP. Ser-107 contacts chloride. Positions 109–116 form an intramembrane region, helical; the sequence is IPEIEGAL. Over 117–123 the chain is Cytoplasmic; sequence EELRPVR. 2 helical membrane-spanning segments follow: residues 124-141 and 148-166; these read WWRV…TLGA and EGPT…LDVF. Positions 146-150 match the Selectivity filter part_2 motif; sequence GREGP. Residues 167–176 are Cytoplasmic-facing; sequence RMRSAEARHT. 2 consecutive intramembrane regions (helical) follow at residues 177–189 and 193–201; these read LLAT…LSAA and PLAGILFII. Residues 202-214 lie on the Cytoplasmic side of the membrane; it reads EEMRPQFRYNLIS. A helical transmembrane segment spans residues 215–232; that stretch reads IKAVFTGVIMSSIVFRIF. Residues 233–252 lie on the Periplasmic side of the membrane; the sequence is NGEAPIIEVGKLSDAPVNTL. The helical transmembrane segment at 253-281 threads the bilayer; it reads WLYLILGIIFGCVGPVFNSLVLRTQDMFQ. Over 282–287 the chain is Cytoplasmic; it reads RFHGGE. Residues 288–309 form a helical membrane-spanning segment; the sequence is IKKWVLMGGAIGGLCGILGLIE. Residues 310-329 are Periplasmic-facing; sequence PEAAGGGFNLIPIAAAGNFS. The next 2 membrane-spanning stretches (helical) occupy residues 330-349 and 355-376; these read VGLL…LCFS and GIFA…MAAA. The Selectivity filter part_3 signature appears at 355 to 359; that stretch reads GIFAP. Residues Ile-356 and Phe-357 each coordinate chloride. Residues 377-386 are Periplasmic-facing; that stretch reads VLFPQYHLEA. Positions 387 to 401 form an intramembrane region, helical; the sequence is GTFAIAGMGALMAAS. Positions 402-404 form an intramembrane region, note=Loop between two helices; the sequence is VRA. The helical intramembrane region spans 405 to 416; it reads PLTGIVLVLEMT. Residues 417 to 421 constitute an intramembrane region (note=Loop between two helices); sequence DNYQL. The chain crosses the membrane as a helical span at residues 422–438; the sequence is ILPMIITCLGATLLAQF. At 439 to 473 the chain is on the cytoplasmic side; that stretch reads LGGKPLYSTILARTLAKQDAEQAAKNQNAPAGENT. Tyr-445 provides a ligand contact to chloride.

The protein belongs to the chloride channel (TC 2.A.49) family. ClcA subfamily. In terms of assembly, homodimer.

The protein resides in the cell inner membrane. The enzyme catalyses 2 chloride(in) + H(+)(out) = 2 chloride(out) + H(+)(in). Its function is as follows. Proton-coupled chloride transporter. Functions as antiport system and exchanges two chloride ions for 1 proton. Probably acts as an electrical shunt for an outwardly-directed proton pump that is linked to amino acid decarboxylation, as part of the extreme acid resistance (XAR) response. The sequence is that of H(+)/Cl(-) exchange transporter ClcA from Salmonella newport (strain SL254).